We begin with the raw amino-acid sequence, 452 residues long: Tubulin alpha-1 chain (452 aa).

Gln-11 lines the GTP pocket. Lys-40 carries the N6-acetyllysine modification. GTP is bound by residues Glu-71, Gly-144, Thr-145, Thr-179, Asn-206, and Asn-228. Glu-71 contacts Mg(2+). Residue Glu-254 is part of the active site. Residues 430 to 452 are disordered; sequence KDYEEVGAESGDGDDDGLGEEEY. Positions 431–452 are enriched in acidic residues; it reads DYEEVGAESGDGDDDGLGEEEY.

Belongs to the tubulin family. Dimer of alpha and beta chains. A typical microtubule is a hollow water-filled tube with an outer diameter of 25 nm and an inner diameter of 15 nM. Alpha-beta heterodimers associate head-to-tail to form protofilaments running lengthwise along the microtubule wall with the beta-tubulin subunit facing the microtubule plus end conferring a structural polarity. Microtubules usually have 13 protofilaments but different protofilament numbers can be found in some organisms and specialized cells. Requires Mg(2+) as cofactor. In terms of processing, undergoes a tyrosination/detyrosination cycle, the cyclic removal and re-addition of a C-terminal tyrosine residue by the enzymes tubulin tyrosine carboxypeptidase (TTCP) and tubulin tyrosine ligase (TTL), respectively. Post-translationally, acetylation of alpha chains at Lys-40 stabilizes microtubules and affects affinity and processivity of microtubule motors. This modification has a role in multiple cellular functions, ranging from cell motility, cell cycle progression or cell differentiation to intracellular trafficking and signaling.

It is found in the cytoplasm. The protein localises to the cytoskeleton. The enzyme catalyses GTP + H2O = GDP + phosphate + H(+). Its function is as follows. Tubulin is the major constituent of microtubules, a cylinder consisting of laterally associated linear protofilaments composed of alpha- and beta-tubulin heterodimers. Microtubules grow by the addition of GTP-tubulin dimers to the microtubule end, where a stabilizing cap forms. Below the cap, tubulin dimers are in GDP-bound state, owing to GTPase activity of alpha-tubulin. The chain is Tubulin alpha-1 chain (TUBA1) from Pisum sativum (Garden pea).